A 932-amino-acid polypeptide reads, in one-letter code: Complement component C6 (932 aa).

A signal peptide spans 1 to 21 (MARHSVMYFILLSALIDKSQA). Intrachain disulfides connect Cys22-Cys61, Cys24-Cys65, Cys35-Cys73, Cys39-Cys78, Cys82-Cys117, Cys93-Cys127, Cys96-Cys133, Cys140-Cys151, Cys146-Cys164, Cys158-Cys173, and Cys180-Cys218. TSP type-1 domains follow at residues 22–79 (CFCD…QTCP) and 81–134 (NCRL…KLCK). 2 C-linked (Man) tryptophan glycosylation sites follow: Trp29 and Trp32. A glycan (O-linked (Fuc...) threonine) is linked at Thr38. Trp90 carries a C-linked (Man) tryptophan glycan. An LDL-receptor class A domain is found at 139–174 (DCKNKFRCDSGRCIASKLECNGENDCGDNSDERNCG). 6 residues coordinate Ca(2+): Leu156, Asn159, Glu161, Asp163, Asp169, and Glu170. Residues 176–522 (KKTVCSRSHN…EYAAKFDPCQ (347 aa)) enclose the MACPF domain. Residues 278–290 (SFRVPIFYSSKRS) traverse the membrane as a beta stranded segment. An N-linked (GlcNAc...) asparagine glycan is attached at Asn324. Residue Thr392 is glycosylated (O-linked (Fuc...) threonine). 16 disulfides stabilise this stretch: Cys399-Cys420, Cys499-Cys623, Cys521-Cys570, Cys523-Cys539, Cys526-Cys541, Cys543-Cys552, Cys577-Cys611, Cys589-Cys601, Cys644-Cys686, Cys672-Cys699, Cys704-Cys746, Cys732-Cys761, Cys773-Cys823, Cys784-Cys801, Cys786-Cys837, and Cys793-Cys816. The beta stranded transmembrane segment at 402–415 (IETKKRFLFVKKTK) threads the bilayer. The EGF-like domain occupies 523 to 553 (CARCPNSGRPVLSGTECLCVCQSGTYGENCE). The region spanning 565-612 (DGNWGCWSSWSSCDATYRRSRTRECNNPAPQQGGKRCEGERRQEEHCT) is the TSP type-1 3 domain. Trp568, Trp571, and Trp574 each carry a C-linked (Man) tryptophan glycan. CCP regions lie at residues 611–688 (CTFS…RCLP) and 689–765 (DRSW…EKDV). Sushi domains lie at 642 to 701 (SGCP…ECQR) and 702 to 763 (TECL…SCEK). The tract at residues 642–932 (SGCPQPVPPE…EMEILHSGRC (291 aa)) is C5b-binding domain. 2 factor I module (FIM) regions span residues 766–840 (LTGL…CEEG) and 858–932 (KNES…SGRC). The 60-residue stretch at 780 to 839 (LGSECVCMSPEEDCGHYSEEICVLDTTSSDYFTSSACKLLAEKCLNNQQLHFVHIGSCEE) folds into the Kazal-like 1 domain. N-linked (GlcNAc...) asparagine glycosylation is present at Asn859. 5 disulfides stabilise this stretch: Cys862–Cys873, Cys867–Cys919, Cys880–Cys897, Cys882–Cys932, and Cys888–Cys912. Residues 876–932 (TTSKCVCLLPSQCTKGGDQLFCVQIGSSANGKTMNICEVGAVKCAKREMEILHSGRC) form the Kazal-like 2 domain.

This sequence belongs to the complement C6/C7/C8/C9 family. In terms of assembly, component of the membrane attack complex (MAC), composed of complement C5b, C6, C7, C8A, C8B, C8G and multiple copies of the pore-forming subunit C9. In terms of processing, all cysteine residues are assumed to be cross-linked to one another. Individual modules containing an even number of conserved cysteine residues are supposed to have disulfide linkages only within the same module.

Its subcellular location is the secreted. It is found in the target cell membrane. Its activity is regulated as follows. Membrane attack complex (MAC) assembly is inhibited by CD59, thereby protecting self-cells from damage during complement activation. MAC assembly is also inhibited by clusterin (CLU) chaperones that inhibit polymerization of C9. Component of the membrane attack complex (MAC), a multiprotein complex activated by the complement cascade, which inserts into a target cell membrane and forms a pore, leading to target cell membrane rupture and cell lysis. The MAC is initiated by proteolytic cleavage of C5 into complement C5b in response to the classical, alternative, lectin and GZMK complement pathways. The complement pathways consist in a cascade of proteins that leads to phagocytosis and breakdown of pathogens and signaling that strengthens the adaptive immune system. Together with component C5b, involved in MAC complex assembly: complement C5b and C6 associate with the outer leaflet of target cell membrane, reducing the energy for membrane bending. This Bos taurus (Bovine) protein is Complement component C6 (C6).